The chain runs to 494 residues: Glutamate--tRNA ligase (494 aa).

The 'HIGH' region motif lies at 9–19 (PSPTGDPHLGT). A 'KMSKS' region motif is present at residues 250-254 (KLSKR). Lys-253 lines the ATP pocket.

Belongs to the class-I aminoacyl-tRNA synthetase family. Glutamate--tRNA ligase type 1 subfamily. Monomer.

The protein resides in the cytoplasm. The enzyme catalyses tRNA(Glu) + L-glutamate + ATP = L-glutamyl-tRNA(Glu) + AMP + diphosphate. Its function is as follows. Catalyzes the attachment of glutamate to tRNA(Glu) in a two-step reaction: glutamate is first activated by ATP to form Glu-AMP and then transferred to the acceptor end of tRNA(Glu). The chain is Glutamate--tRNA ligase from Pseudoalteromonas translucida (strain TAC 125).